Consider the following 356-residue polypeptide: 4-hydroxy-2-oxovalerate aldolase (356 aa).

The 251-residue stretch at 7 to 257 (PRVTDTTLRD…NPGLDVFKLM (251 aa)) folds into the Pyruvate carboxyltransferase domain. 15 to 16 (RD) contacts substrate. Position 16 (Asp16) interacts with Mn(2+). The active-site Proton acceptor is the His19. The substrate site is built by Ser169 and His196. Mn(2+)-binding residues include His196 and His198. Residue Tyr287 participates in substrate binding.

The protein belongs to the 4-hydroxy-2-oxovalerate aldolase family.

It catalyses the reaction (S)-4-hydroxy-2-oxopentanoate = acetaldehyde + pyruvate. The chain is 4-hydroxy-2-oxovalerate aldolase from Thermomicrobium roseum (strain ATCC 27502 / DSM 5159 / P-2).